The primary structure comprises 214 residues: Adenylate kinase (214 aa).

10–15 (GAGKGT) provides a ligand contact to ATP. The segment at 30–59 (STGDMLRAAVKAGSELGKQAKAIMDAGKLV) is NMP. AMP is bound by residues threonine 31, arginine 36, 57-59 (KLV), 85-88 (GFPR), and glutamine 92. Residues 122-159 (GRRVHPGSGRVYHVKFNPPQVEGKDDVTGEDLMTRKDD) form an LID region. Residues arginine 123 and 132–133 (VY) each bind ATP. AMP is bound by residues arginine 156 and arginine 167. Glutamine 200 contacts ATP.

This sequence belongs to the adenylate kinase family. As to quaternary structure, monomer.

Its subcellular location is the cytoplasm. The catalysed reaction is AMP + ATP = 2 ADP. It participates in purine metabolism; AMP biosynthesis via salvage pathway; AMP from ADP: step 1/1. Its function is as follows. Catalyzes the reversible transfer of the terminal phosphate group between ATP and AMP. Plays an important role in cellular energy homeostasis and in adenine nucleotide metabolism. This is Adenylate kinase from Edwardsiella ictaluri (strain 93-146).